A 1368-amino-acid polypeptide reads, in one-letter code: DNA-directed RNA polymerase subunit beta (1368 aa).

It belongs to the RNA polymerase beta chain family. As to quaternary structure, the RNAP catalytic core consists of 2 alpha, 1 beta, 1 beta' and 1 omega subunit. When a sigma factor is associated with the core the holoenzyme is formed, which can initiate transcription.

The catalysed reaction is RNA(n) + a ribonucleoside 5'-triphosphate = RNA(n+1) + diphosphate. In terms of biological role, DNA-dependent RNA polymerase catalyzes the transcription of DNA into RNA using the four ribonucleoside triphosphates as substrates. The protein is DNA-directed RNA polymerase subunit beta of Herminiimonas arsenicoxydans.